The chain runs to 386 residues: Na(+)/H(+) antiporter NhaA (386 aa).

11 consecutive transmembrane segments (helical) span residues 10-30 (MGSA…IFAN), 58-78 (LLHW…GLEV), 94-114 (IFPA…YYLI), 124-144 (GWAI…ALLG), 154-174 (FLLA…AVFF), 176-196 (EELS…LITL), 199-219 (MKVG…AAVL), 253-273 (ILTP…NAGV), 283-303 (IFST…PLGV), 327-347 (VFAI…LAGL), and 361-381 (LSRL…YLLL).

The protein belongs to the NhaA Na(+)/H(+) (TC 2.A.33) antiporter family.

The protein localises to the cell inner membrane. The catalysed reaction is Na(+)(in) + 2 H(+)(out) = Na(+)(out) + 2 H(+)(in). In terms of biological role, na(+)/H(+) antiporter that extrudes sodium in exchange for external protons. The protein is Na(+)/H(+) antiporter NhaA of Mannheimia succiniciproducens (strain KCTC 0769BP / MBEL55E).